The primary structure comprises 91 residues: Small ribosomal subunit protein uS19 (91 aa).

The protein belongs to the universal ribosomal protein uS19 family.

Protein S19 forms a complex with S13 that binds strongly to the 16S ribosomal RNA. In Metamycoplasma hominis (strain ATCC 23114 / DSM 25592 / NBRC 14850 / NCTC 10111 / PG21) (Mycoplasma hominis), this protein is Small ribosomal subunit protein uS19.